The following is a 348-amino-acid chain: GMP reductase (348 aa).

Residue Ala-108–Ala-131 participates in NADP(+) binding. 2 residues coordinate K(+): Gly-181 and Gly-183. Residue Cys-186 is the Thioimidate intermediate of the active site. Residue Ile-216–Val-239 coordinates NADP(+).

Belongs to the IMPDH/GMPR family. GuaC type 1 subfamily. In terms of assembly, homotetramer.

The enzyme catalyses IMP + NH4(+) + NADP(+) = GMP + NADPH + 2 H(+). Catalyzes the irreversible NADPH-dependent deamination of GMP to IMP. It functions in the conversion of nucleobase, nucleoside and nucleotide derivatives of G to A nucleotides, and in maintaining the intracellular balance of A and G nucleotides. This chain is GMP reductase, found in Vibrio vulnificus (strain CMCP6).